The following is a 325-amino-acid chain: Glutarate 2-hydroxylase (325 aa).

Fe cation is bound by residues His-160, Asp-162, and His-292.

The protein belongs to the glutarate hydroxylase family. Homotetramer. The cofactor is Fe(2+).

It catalyses the reaction glutarate + 2-oxoglutarate + O2 = (S)-2-hydroxyglutarate + succinate + CO2. It participates in amino-acid degradation. In terms of biological role, acts as an alpha-ketoglutarate-dependent dioxygenase catalyzing hydroxylation of glutarate (GA) to L-2-hydroxyglutarate (L2HG). Functions in a L-lysine degradation pathway that proceeds via cadaverine, glutarate and L-2-hydroxyglutarate. The chain is Glutarate 2-hydroxylase from Pseudomonas putida (strain ATCC 700007 / DSM 6899 / JCM 31910 / BCRC 17059 / LMG 24140 / F1).